A 733-amino-acid chain; its full sequence is MATKFPKFSQGLASDPTTRRIWFGIATAHDFETHDGMTEEKLYQKIFASHFGQLAIIFLWTSGNLFHVAWQGNFEKWGEDPLHVRPIAHTIWDPHFGQPAVEAFTRGGASAPVNIAYSGVYQWWYTIGMRTNVDLYNGSLFLLFVAGLFLFAGWLHLQPTFAPAVSWFKNAESRLNHHLSGLFGVSSLAWTGHLVHVAIPASRGETVRWDNFLTTLPHPAGLAPFFTGQWAVYAQNPDTAGHIFGTSEGAGTAILTFLGGFHPQTQSLWLTDMAHHHLAIAVVFIIAGHQYRTNFGIGHSMKEILEAHTAPSGRLGAGHTGLFDTVNNSLHFQLGLALASVGVLCSLTAQHMYSMPPYAFLAQDFTTQAALYSHHQYIAGFIMCGAFAHGAIFFIRDYDPEANKGNVLARMLEHKEAIISHLSWVSLFLGFHTLGLYVHNDVMQAFGTPEKQILIEPVFAQWIQAAQGKALYGFDILLSGDNAATAAGNSIYLPGWLAGINSSTNSLFLPIGPGDFLVHHAIALGLHTTTLILVKGALDARGSKLMPDKKDFGYSFPCDGPGRGGTCDISAWDAFYLAVFWELNTVSWTVFYFHWKHLALWQGNSAQFDESSTYIMGWLRDYLWLNSSQLINGYNPFGMNSLSVWAWMFLFGHLIYATGFMFLISWRGYWQELIETLVWAHERTPLANFVKWNDKPVALSIVQARLVGLTHFAVGFVLTYAAFVIASTSGKFG.

A run of 8 helical transmembrane segments spans residues 46-69 (IFAS…FHVA), 135-158 (LYNG…LHLQ), 175-199 (LNHH…HVAI), 273-291 (MAHH…GHQY), 330-353 (LHFQ…QHMY), 369-395 (AALY…IFFI), 417-439 (AIIS…LYVH), and 516-534 (FLVH…LILV). 2 residues coordinate [4Fe-4S] cluster: C558 and C567. The next 2 helical transmembrane spans lie at 574–595 (AFYL…YFHW) and 642–664 (LSVW…MFLI). Chlorophyll a contacts are provided by H653, M661, and Y669. W670 is a phylloquinone binding site. Residues 706–726 (LVGLTHFAVGFVLTYAAFVIA) traverse the membrane as a helical segment.

Belongs to the PsaA/PsaB family. In terms of assembly, the PsaA/B heterodimer binds the P700 chlorophyll special pair and subsequent electron acceptors. PSI consists of a core antenna complex that captures photons, and an electron transfer chain that converts photonic excitation into a charge separation. The eukaryotic PSI reaction center is composed of at least 11 subunits. The cofactor is P700 is a chlorophyll a/chlorophyll a' dimer, A0 is one or more chlorophyll a, A1 is one or both phylloquinones and FX is a shared 4Fe-4S iron-sulfur center..

The protein localises to the plastid. The protein resides in the chloroplast thylakoid membrane. It catalyses the reaction reduced [plastocyanin] + hnu + oxidized [2Fe-2S]-[ferredoxin] = oxidized [plastocyanin] + reduced [2Fe-2S]-[ferredoxin]. In terms of biological role, psaA and PsaB bind P700, the primary electron donor of photosystem I (PSI), as well as the electron acceptors A0, A1 and FX. PSI is a plastocyanin/cytochrome c6-ferredoxin oxidoreductase, converting photonic excitation into a charge separation, which transfers an electron from the donor P700 chlorophyll pair to the spectroscopically characterized acceptors A0, A1, FX, FA and FB in turn. Oxidized P700 is reduced on the lumenal side of the thylakoid membrane by plastocyanin or cytochrome c6. In Ostreococcus tauri, this protein is Photosystem I P700 chlorophyll a apoprotein A2.